Here is a 387-residue protein sequence, read N- to C-terminus: Protein arginine N-methyltransferase 1 (387 aa).

Residues 1–60 (MDQRKGSGSDANGGLAEATASRLRFEDPDEVMEENPAAAAATVGAEEEGGEGGGGEEVIG) are disordered. The span at 34–44 (ENPAAAAATVG) shows a compositional bias: low complexity. The region spanning 66–387 (ADYYFDSYSH…VSRTQHYKMR (322 aa)) is the SAM-dependent MTase PRMT-type domain. S-adenosyl-L-methionine contacts are provided by His-79, Arg-88, Gly-112, Glu-134, and Glu-163. Active-site residues include Glu-178 and Glu-187.

It belongs to the class I-like SAM-binding methyltransferase superfamily. Protein arginine N-methyltransferase family.

It localises to the nucleus. It carries out the reaction L-arginyl-[protein] + S-adenosyl-L-methionine = N(omega)-methyl-L-arginyl-[protein] + S-adenosyl-L-homocysteine + H(+). The enzyme catalyses L-arginyl-[protein] + 2 S-adenosyl-L-methionine = N(omega),N(omega)-dimethyl-L-arginyl-[protein] + 2 S-adenosyl-L-homocysteine + 2 H(+). Its function is as follows. Arginine methyltransferase that methylates (mono and asymmetric dimethylation) the guanidino nitrogens of arginyl residues present in target proteins. The sequence is that of Protein arginine N-methyltransferase 1 (PRMT1) from Oryza sativa subsp. indica (Rice).